The primary structure comprises 467 residues: Fumarate hydratase class II (467 aa).

Residues 98–100 (SGT), arginine 126, 129–132 (HPND), 139–141 (SSN), and threonine 187 contribute to the substrate site. Histidine 188 (proton donor/acceptor) is an active-site residue. Serine 318 is a catalytic residue. Substrate is bound by residues serine 319 and 324–326 (KVN).

It belongs to the class-II fumarase/aspartase family. Fumarase subfamily. In terms of assembly, homotetramer.

The protein localises to the cytoplasm. It carries out the reaction (S)-malate = fumarate + H2O. It functions in the pathway carbohydrate metabolism; tricarboxylic acid cycle; (S)-malate from fumarate: step 1/1. With respect to regulation, inhibited by ATP, citrate and S-2,3-dicarboxyaziridine. In terms of biological role, involved in the TCA cycle. FumC seems to be a backup enzyme for FumA under conditions of iron limitation and oxidative stress. Catalyzes the stereospecific interconversion of fumarate to L-malate. The polypeptide is Fumarate hydratase class II (Escherichia coli (strain K12)).